The following is a 117-amino-acid chain: Glutamine-rich protein (117 aa).

A compositionally biased stretch (low complexity) spans 27-72 (RQQFQQQQQQQRQPQLQQQQQQQGIQQQPQGLQHQQQQFGLTQQHG). Positions 27–88 (RQQFQQQQQQ…IVQPNPASQN (62 aa)) are disordered. A compositionally biased stretch (polar residues) spans 75–87 (RRQNIVQPNPASQ).

As to expression, component of the acid-soluble and acid-insoluble organic matrix of calcified shell layers (at protein level).

It localises to the secreted. The chain is Glutamine-rich protein from Haliotis asinina (Donkey's ear abalone).